The sequence spans 383 residues: MAGIPGLLFLLFFLLCAVGQVSPYSAPWKPTWPAYRLPVVLPQSTLNLAKPDFGAEAKLEVSSSCGPQCHKGTPLPTYEEAKQYLSYETLYANGSRTETQVGIYILSSSGDGAQHRDSGSSGKSRRKRQIYGYDSRFSIFGKDFLLNYPFSTSVKLSTGCTGTLVAEKHVLTAAHCIHDGKTYVKGTQKLRVGFLKPKFKDGGRGANDSTSAMPEQMKFQWIRVKRTHVPKGWIKGNANDIGMDYDYALLELKKPHKRKFMKIGVSPPAKQLPGGRIHFSGYDNDRPGNLVYRFCDVKDETYDLLYQQCDAQPGASGSGVYVRMWKRQQQKWERKIIGIFSGHQWVDMNGSPQDFNVAVRITPLKYAQICYWIKGNYLDCREG.

The N-terminal stretch at 1–19 (MAGIPGLLFLLFFLLCAVG) is a signal peptide. The N-linked (GlcNAc...) asparagine glycan is linked to asparagine 93. Serine 109 bears the Phosphoserine; by FAM20C mark. Cysteine 160 and cysteine 176 are joined by a disulfide. Catalysis depends on histidine 175, which acts as the Charge relay system. The N-linked (GlcNAc...) asparagine glycan is linked to asparagine 207. Residues aspartate 240 and serine 316 each act as charge relay system in the active site.

The protein belongs to the peptidase S1 family.

Its subcellular location is the secreted. In Homo sapiens (Human), this protein is Serine protease 23 (PRSS23).